We begin with the raw amino-acid sequence, 274 residues long: Uridine-5'-phosphate dioxygenase (274 aa).

3 residues coordinate Fe cation: H103, D105, and H246.

The cofactor is Fe(2+).

The enzyme catalyses UMP + 2-oxoglutarate + O2 = uridine-5'-aldehyde + succinate + phosphate + CO2. It functions in the pathway antibiotic biosynthesis. With respect to regulation, inhibited by several divalent cations, including Zn(2+). Dioxygenase involved in the biosynthesis of the lipopeptidyl nucleoside antibiotic A-90289. Catalyzes the dephosphorylation and oxidation of UMP to generate uridine-5'-aldehyde, the first intermediate in the biosynthesis of A-90289. The sequence is that of Uridine-5'-phosphate dioxygenase from Streptomyces sp.